Consider the following 578-residue polypeptide: Poly(A) RNA polymerase cid13 (578 aa).

Positions 110 and 112 each coordinate Mg(2+). The 56-residue stretch at Ser-275 to Ser-330 folds into the PAP-associated domain. The segment at Ser-495–His-565 is disordered. The span at His-496–Asn-510 shows a compositional bias: basic and acidic residues. Over residues Arg-516–Gln-527 the composition is skewed to basic residues. Positions Asn-547–His-565 are enriched in low complexity.

It belongs to the DNA polymerase type-B-like family. As to quaternary structure, interacts with pab1. Mg(2+) serves as cofactor. Requires Mn(2+) as cofactor.

It is found in the cytoplasm. The protein localises to the nucleus. The enzyme catalyses RNA(n) + ATP = RNA(n)-3'-adenine ribonucleotide + diphosphate. In terms of biological role, polymerase that creates the 3' poly(A) tail of suc22 mRNA. This is Poly(A) RNA polymerase cid13 (cid13) from Schizosaccharomyces pombe (strain 972 / ATCC 24843) (Fission yeast).